The following is a 59-amino-acid chain: uncharacterized protein (59 aa).

This is an uncharacterized protein from Caenorhabditis elegans.